A 543-amino-acid chain; its full sequence is Chaperonin GroEL (543 aa).

Residues 30-33, Lys51, 87-91, Gly415, 480-482, and Asp496 each bind ATP; these read TLGP, DGTTT, and NAL.

It belongs to the chaperonin (HSP60) family. Forms a cylinder of 14 subunits composed of two heptameric rings stacked back-to-back. Interacts with the co-chaperonin GroES.

It is found in the cytoplasm. It catalyses the reaction ATP + H2O + a folded polypeptide = ADP + phosphate + an unfolded polypeptide.. Its function is as follows. Together with its co-chaperonin GroES, plays an essential role in assisting protein folding. The GroEL-GroES system forms a nano-cage that allows encapsulation of the non-native substrate proteins and provides a physical environment optimized to promote and accelerate protein folding. The protein is Chaperonin GroEL of Gemmatimonas aurantiaca (strain DSM 14586 / JCM 11422 / NBRC 100505 / T-27).